A 220-amino-acid polypeptide reads, in one-letter code: Thioredoxin domain-containing protein (220 aa).

An N-terminal signal peptide occupies residues 1 to 19 (MKFLILNCLILFSLISSEA). The Thioredoxin domain occupies 20–141 (TNVKLDREDQ…SEFALGDFKN (122 aa)). The Lumenal segment spans residues 20–181 (TNVKLDREDQ…YDAALAGFVT (162 aa)). Cys-64 and Cys-67 form a disulfide bridge. A helical membrane pass occupies residues 182 to 202 (ISSFSFLFGLLVGLMLSLFLF). The Cytoplasmic portion of the chain corresponds to 203-220 (TRRATRKPKVLTERKKDK). The short motif at 217–220 (KKDK) is the Di-lysine motif element.

Belongs to the protein disulfide isomerase family.

It is found in the endoplasmic reticulum membrane. The sequence is that of Thioredoxin domain-containing protein from Theileria parva (East coast fever infection agent).